The following is a 191-amino-acid chain: Probable protein adenylyltransferase HI_0977 (191 aa).

The 126-residue stretch at 37 to 162 (GSTKGLQQIH…NDLEIRFLLQ (126 aa)) folds into the Fido domain. Residues 67-68 (KG), 112-114 (GNG), Arg118, and Gln145 contribute to the ATP site.

Belongs to the fic family.

The catalysed reaction is L-tyrosyl-[protein] + ATP = O-(5'-adenylyl)-L-tyrosyl-[protein] + diphosphate. The enzyme catalyses L-threonyl-[protein] + ATP = 3-O-(5'-adenylyl)-L-threonyl-[protein] + diphosphate. Its function is as follows. Probable adenylyltransferase that mediates the addition of adenosine 5'-monophosphate (AMP) to specific residues of target proteins. The polypeptide is Probable protein adenylyltransferase HI_0977 (Haemophilus influenzae (strain ATCC 51907 / DSM 11121 / KW20 / Rd)).